Here is a 112-residue protein sequence, read N- to C-terminus: MAAVKQKMHVKKGDMVMVITGKDAGKKGKVLEVFPKKGRVVIEKVNIVKRHTKPSQSMPQGGIFEKEAPIASSNVMLYCTECNKVTRVSVKETEAGKVRVCKKCGVNLPDKK.

This sequence belongs to the universal ribosomal protein uL24 family. Part of the 50S ribosomal subunit.

Its function is as follows. One of two assembly initiator proteins, it binds directly to the 5'-end of the 23S rRNA, where it nucleates assembly of the 50S subunit. In terms of biological role, one of the proteins that surrounds the polypeptide exit tunnel on the outside of the subunit. The protein is Large ribosomal subunit protein uL24 of Desulfitobacterium hafniense (strain Y51).